Reading from the N-terminus, the 151-residue chain is UPF0735 ACT domain-containing protein SAUSA300_1599 (151 aa).

The 76-residue stretch at 74 to 149 folds into the ACT domain; that stretch reads TLILYVTDIV…YVSKVELISM (76 aa).

It belongs to the UPF0735 family.

The sequence is that of UPF0735 ACT domain-containing protein SAUSA300_1599 from Staphylococcus aureus (strain USA300).